The following is a 359-amino-acid chain: DNA polymerase IV (359 aa).

Residues 7–188 form the UmuC domain; it reads IIHIDMDAFY…IPIGKFFGVG (182 aa). Mg(2+)-binding residues include Asp11 and Asp106. Residue Glu107 is part of the active site.

This sequence belongs to the DNA polymerase type-Y family. Monomer. Mg(2+) serves as cofactor.

The protein localises to the cytoplasm. It carries out the reaction DNA(n) + a 2'-deoxyribonucleoside 5'-triphosphate = DNA(n+1) + diphosphate. Poorly processive, error-prone DNA polymerase involved in untargeted mutagenesis. Copies undamaged DNA at stalled replication forks, which arise in vivo from mismatched or misaligned primer ends. These misaligned primers can be extended by PolIV. Exhibits no 3'-5' exonuclease (proofreading) activity. May be involved in translesional synthesis, in conjunction with the beta clamp from PolIII. In Clostridium perfringens (strain ATCC 13124 / DSM 756 / JCM 1290 / NCIMB 6125 / NCTC 8237 / Type A), this protein is DNA polymerase IV.